Reading from the N-terminus, the 423-residue chain is Voltage-dependent calcium channel gamma-8 subunit (423 aa).

4 helical membrane-spanning segments follow: residues V19 to I39, S127 to A147, I157 to I177, and F207 to I227. Phosphoserine occurs at positions 251 and 254. The interval R271–I304 is disordered. Positions S276–R287 are enriched in low complexity. A helical transmembrane segment spans residues V318 to G338. Disordered stretches follow at residues G342–T363 and V378–V423. The segment covering P384–P399 has biased composition (pro residues). The segment covering A410–V423 has biased composition (polar residues).

Belongs to the PMP-22/EMP/MP20 family. CACNG subfamily. Interacts with CACNA1C. Identified in a complex with the L-type calcium channel subunits CACNA1C, CACNA2D1 and either CACNB1 or CACNB2. Acts as an auxiliary subunit for AMPA-selective glutamate receptors (AMPARs). Found in a complex with GRIA1, GRIA2, GRIA3, GRIA4, CNIH2, CNIH3, CACNG2, CACNG3, CACNG4, CACNG5 and CACNG7. Interacts with CNIH2. Found in a complex with GRIA1, GRIA2, GRIA3, GRIA4, DLG4 and CNIH2. Palmitoylated. Probably palmitoylated by ZDHHC3 and ZDHHC7.

It is found in the cell membrane. The protein resides in the postsynaptic density membrane. Functionally, regulates the activity of L-type calcium channels that contain CACNA1C as pore-forming subunit. Regulates the trafficking and gating properties of AMPA-selective glutamate receptors (AMPARs). Promotes their targeting to the cell membrane and synapses and modulates their gating properties by slowing their rates of activation, deactivation and desensitization and by mediating their resensitization. Does not show subunit-specific AMPA receptor regulation and regulates all AMPAR subunits. Thought to stabilize the calcium channel in an inactivated (closed) state. The polypeptide is Voltage-dependent calcium channel gamma-8 subunit (Mus musculus (Mouse)).